A 1575-amino-acid polypeptide reads, in one-letter code: Lysophospholipase NTE1 (1575 aa).

Residues 1-56 (MNLTTTMPAAVAPDPPAQLAVSSRSLSDSSDAAGASRTSSSCRASSPSHCPTHAWN) form a disordered region. Residues 1–99 (MNLTTTMPAA…TLSPPNLLQG (99 aa)) lie on the Cytoplasmic side of the membrane. A compositionally biased stretch (low complexity) spans 19 to 48 (LAVSSRSLSDSSDAAGASRTSSSCRASSPS). Residues 100-120 (IVSQLAMASYIGRLLLYLFQV) form a helical membrane-spanning segment. The Lumenal portion of the chain corresponds to 121-151 (VPSLLYWAITFTTITVPTALFTLFSMSLTFT). Residues 152-172 (MNFTTLLIIVLLLVSTVSWFI) traverse the membrane as a helical segment. At 173 to 1575 (RYRFLNIYSR…RTMAPRRASI (1403 aa)) the chain is on the cytoplasmic side. Disordered regions lie at residues 339-425 (DMES…AKSV) and 568-587 (GSAS…VSPG). Residues 409–424 (RGHRRKRPSRPKRAKS) show a composition bias toward basic residues. Residues 737–856 (GGTS…TSYR) and 894–1014 (RLTT…IAQR) each bind a nucleoside 3',5'-cyclic phosphate. Residues 1272–1436 (LVLGGGGARG…VDNLTVARMK (165 aa)) form the PNPLA domain. Residues 1276–1281 (GGGARG) carry the GXGXXG motif. The GXSXG motif lies at 1303–1307 (GTSIG). S1305 acts as the Nucleophile in catalysis. D1423 serves as the catalytic Proton acceptor. The short motif at 1423–1425 (DGG) is the DGA/G element.

The protein belongs to the NTE family.

Its subcellular location is the endoplasmic reticulum membrane. It catalyses the reaction a 1-acyl-sn-glycero-3-phosphocholine + H2O = sn-glycerol 3-phosphocholine + a fatty acid + H(+). Inhibited by organophosphorus esters. Functionally, intracellular phospholipase B that catalyzes the double deacylation of phosphatidylcholine (PC) to glycerophosphocholine (GroPCho). Plays an important role in membrane lipid homeostasis. Responsible for the rapid PC turnover in response to inositol, elevated temperatures, or when choline is present in the growth medium. The polypeptide is Lysophospholipase NTE1 (NTE1) (Coccidioides immitis (strain RS) (Valley fever fungus)).